The sequence spans 385 residues: 4-hydroxy-3-methylbut-2-en-1-yl diphosphate synthase (flavodoxin) 2 (385 aa).

The [4Fe-4S] cluster site is built by Cys280, Cys283, Cys315, and Glu322.

This sequence belongs to the IspG family. [4Fe-4S] cluster is required as a cofactor.

The catalysed reaction is (2E)-4-hydroxy-3-methylbut-2-enyl diphosphate + oxidized [flavodoxin] + H2O + 2 H(+) = 2-C-methyl-D-erythritol 2,4-cyclic diphosphate + reduced [flavodoxin]. It functions in the pathway isoprenoid biosynthesis; isopentenyl diphosphate biosynthesis via DXP pathway; isopentenyl diphosphate from 1-deoxy-D-xylulose 5-phosphate: step 5/6. Its function is as follows. Converts 2C-methyl-D-erythritol 2,4-cyclodiphosphate (ME-2,4cPP) into 1-hydroxy-2-methyl-2-(E)-butenyl 4-diphosphate. The protein is 4-hydroxy-3-methylbut-2-en-1-yl diphosphate synthase (flavodoxin) 2 of Streptomyces coelicolor (strain ATCC BAA-471 / A3(2) / M145).